The sequence spans 643 residues: MKDYDELLKYYELYETIGTGGFAKVKLACHVLTGEMVAIKIMDKNALGSDLPRVKTEIDALKSLRHQHICQLYHVLETKNKIFMVLEYCPGGELFDYIISQDRLSEEETRVVFRQILSAVAYVHSQGYAHRDLKPENLLFDENHKLKLIDFGLCAKPKGNKDYHLQTCCGSLAYAAPELIQGKSYLGSEADVWSMGILLYVLMCGFLPFDDDNVMALYKKIMRGKYEVPKWLSPSSILLLQQMLQVDPKKRISMRNLLNHPWVMQDYSCPVEWQSKTPLTHLDEDCVTELSVHHRSSRQTMEDLISSWQYDHLTATYLLLLAKKARGKPARLQLLSFSCGTASTTPKSKNLSLEDMSTSDDNCVAGLIDYELCEDKLLAPKTPQVTKHLAESNHAASKSPAPGVRRAVANKLMDKENVCTPKSSVKNEEQFVFSEPKIPVSKNQYKREIPASPTRFPTPAKARAQCLREAPVRTPGNSAGADTLTTGVISPERRCRSMDVDLNQAHMEDTPKKKGTNVFGSLERGLDKVLTALTRNKKKGSARDGPRKRKLHYNVTTTRLVNPDQLLSEIMAILPKKNVDFVQKGYTLKCQTQSDFGKVTMQFELEVCQLQRPDVVGIRRQRLKGDAWVYKRLVEDILSGCKM.

Positions 11-263 (YELYETIGTG…MRNLLNHPWV (253 aa)) constitute a Protein kinase domain. ATP is bound by residues 17–25 (IGTGGFAKV) and Lys-40. Thr-56 bears the Phosphothreonine; by autocatalysis mark. Residue Asp-132 is the Proton acceptor of the active site. Tyr-163 carries the post-translational modification Phosphotyrosine; by autocatalysis. Thr-167 is subject to Phosphothreonine; by autocatalysis. Phosphoserine; by autocatalysis is present on residues Ser-171 and Ser-253. Positions 282 to 321 (LDEDCVTELSVHHRSSRQTMEDLISSWQYDHLTATYLLLL) are UBA-like. An autoinhibitory region region spans residues 326–643 (RGKPARLQLL…VEDILSGCKM (318 aa)). Phosphoserine; by autocatalysis occurs at positions 336 and 343. Ser-352 bears the Phosphoserine mark. A phosphoserine; by autocatalysis mark is found at Ser-399 and Ser-423. Position 486 is a phosphothreonine; by autocatalysis (Thr-486). Position 490 is a phosphoserine (Ser-490). Ser-497 is modified (phosphoserine; by autocatalysis). Phosphothreonine is present on Thr-510. Ser-521 carries the post-translational modification Phosphoserine; by autocatalysis. Residue Thr-531 is modified to Phosphothreonine; by autocatalysis. Positions 594-643 (SDFGKVTMQFELEVCQLQRPDVVGIRRQRLKGDAWVYKRLVEDILSGCKM) constitute a KA1 domain.

This sequence belongs to the protein kinase superfamily. CAMK Ser/Thr protein kinase family. SNF1 subfamily. Monomer. Interacts with ZNF622 and PPP1R8. In terms of processing, autophosphorylated: autophosphorylation of the T-loop at Thr-167 and Ser-171 is required for activation. In terms of tissue distribution, expressed in testis, ovary, thymus, spleen and T-cell. Expressed by neural progenitors: highly enriched in cultures containing multipotent progenitors.

It localises to the cell membrane. The enzyme catalyses L-tyrosyl-[protein] + ATP = O-phospho-L-tyrosyl-[protein] + ADP + H(+). It catalyses the reaction L-seryl-[protein] + ATP = O-phospho-L-seryl-[protein] + ADP + H(+). It carries out the reaction L-threonyl-[protein] + ATP = O-phospho-L-threonyl-[protein] + ADP + H(+). Activated by autophosphorylation of the T-loop at Thr-167 and Ser-171: in contrast to other members of the SNF1 subfamily, phosphorylation at Thr-167 is not mediated by STK11/LKB1 but via autophosphorylation instead. Inhibited by calcium-binding. Kinase activity is also regulated by reducing agents: dithiothreitol (DTT) or reduced glutathione are required for kinase activity in vitro; such dependence is however not due to the presence of disulfide bonds. In terms of biological role, serine/threonine-protein kinase involved in various processes such as cell cycle regulation, self-renewal of stem cells, apoptosis and splicing regulation. Has a broad substrate specificity; phosphorylates BCL2L14, CDC25B, MAP3K5/ASK1 and ZNF622. Acts as an activator of apoptosis by phosphorylating and activating MAP3K5/ASK1. Acts as a regulator of cell cycle, notably by mediating phosphorylation of CDC25B, promoting localization of CDC25B to the centrosome and the spindle poles during mitosis. Plays a key role in cell proliferation. Required for proliferation of embryonic and postnatal multipotent neural progenitors. Phosphorylates and inhibits BCL2L14. Also involved in the inhibition of spliceosome assembly during mitosis by phosphorylating ZNF622, thereby contributing to its redirection to the nucleus. May also play a role in primitive hematopoiesis. The chain is Maternal embryonic leucine zipper kinase (Melk) from Mus musculus (Mouse).